The following is a 468-amino-acid chain: PE family protein PE3 (468 aa).

Residues 1-92 (MSYVIAAPEM…AGAAYAQAEA (92 aa)) enclose the PE domain. The 222-residue stretch at 154–375 (PVAQYTPEQW…DLRVLVDLGY (222 aa)) folds into the PE-PPE domain.

Belongs to the mycobacterial PE family.

It is found in the secreted. Its subcellular location is the cell wall. Plays significant roles in mycobacterial persistence during infection and modulates host immune response. This chain is PE family protein PE3, found in Mycobacterium tuberculosis (strain ATCC 25618 / H37Rv).